Here is an 888-residue protein sequence, read N- to C-terminus: Collagen alpha chain (888 aa).

A disordered region spans residues 1 to 627; the sequence is APGPDGLTGT…GPPGQPGMSE (627 aa). Positions 3–60 constitute a Collagen-like 1 domain; the sequence is GPDGLTGTKGSMGEPGTDGEPGSPGPQGAKGETGLAGRRGLTGIPGKQGRQGERGEPG. 2 stretches are compositionally biased toward low complexity: residues 59–73 and 148–164; these read PGTAGSQGQQGQPGT and TPGLPGMPGQQGPMGPI. The span at 179-190 shows a compositional bias: basic and acidic residues; that stretch reads RGYDGKDGEPGR. The segment covering 194–203 has biased composition (low complexity); it reads PGPIGQPGIP. Positions 311 to 320 are enriched in pro residues; it reads SGPPGPPGPS. Positions 422 to 440 are enriched in low complexity; it reads SGSRGAQGPPGAPGSSGQN. Over residues 441–450 the composition is skewed to gly residues; that stretch reads GVDGGTGENG. Low complexity-rich tracts occupy residues 460-475 and 508-518; these read ESGAPGDPGASGSAGP and EPGPQGDQGPK. Residues 513–571 form the Collagen-like 2 domain; the sequence is GDQGPKGQKGEVGPVGEKGDKGWTGTPGDPGPQGDRGEPGPPGRDGVDGPPGPRGAPGE. Residues 610–622 show a composition bias toward pro residues; that stretch reads PPGPPGPPGPPGQ. The region spanning 661–884 is the Fibrillar collagen NC1 domain; sequence ENVLKDLDEK…KLEIGPACFH (224 aa). Cystine bridges form between cysteine 731–cysteine 882 and cysteine 793–cysteine 833.

It belongs to the fibrillar collagen family. As to expression, component of the acid-insoluble organic matrix of the aragonitic skeleton (at protein level).

Its subcellular location is the secreted. This Acropora millepora (Staghorn coral) protein is Collagen alpha chain.